Reading from the N-terminus, the 381-residue chain is Probable serine/threonine-protein kinase PBL21 (381 aa).

Residue Cys-3 is the site of S-palmitoyl cysteine attachment. The 277-residue stretch at Phe-78–Leu-354 folds into the Protein kinase domain. ATP contacts are provided by residues Leu-84–Val-92 and Lys-106. Asp-204 (proton acceptor) is an active-site residue. Residues Glu-362–Leu-381 form a disordered region.

It belongs to the protein kinase superfamily. Ser/Thr protein kinase family. Post-translationally, palmitoylation at Cys-3 and Cys-7 are required for plasma membrane location.

It localises to the cell membrane. It catalyses the reaction L-seryl-[protein] + ATP = O-phospho-L-seryl-[protein] + ADP + H(+). The enzyme catalyses L-threonyl-[protein] + ATP = O-phospho-L-threonyl-[protein] + ADP + H(+). Functionally, may be involved in plant defense signaling. This Arabidopsis thaliana (Mouse-ear cress) protein is Probable serine/threonine-protein kinase PBL21.